The primary structure comprises 441 residues: Glutamate-1-semialdehyde 2,1-aminomutase (441 aa).

Residue Lys273 is modified to N6-(pyridoxal phosphate)lysine.

Belongs to the class-III pyridoxal-phosphate-dependent aminotransferase family. HemL subfamily. The cofactor is pyridoxal 5'-phosphate.

The protein localises to the cytoplasm. The enzyme catalyses (S)-4-amino-5-oxopentanoate = 5-aminolevulinate. The protein operates within porphyrin-containing compound metabolism; protoporphyrin-IX biosynthesis; 5-aminolevulinate from L-glutamyl-tRNA(Glu): step 2/2. The protein is Glutamate-1-semialdehyde 2,1-aminomutase of Pyrobaculum calidifontis (strain DSM 21063 / JCM 11548 / VA1).